Here is a 202-residue protein sequence, read N- to C-terminus: Vitelline membrane outer layer protein 1 homolog (202 aa).

An N-terminal signal peptide occupies residues 1–24 (MERGAGAKLLPLLLLLRATGFTCA). Cystine bridges form between cysteine 53–cysteine 86, cysteine 114–cysteine 146, cysteine 169–cysteine 199, and cysteine 174–cysteine 200.

It belongs to the VMO1 family.

The protein localises to the secreted. This is Vitelline membrane outer layer protein 1 homolog (VMO1) from Homo sapiens (Human).